The sequence spans 498 residues: ATP synthase subunit alpha 1 (498 aa).

164–171 (GNRQSGKT) is a binding site for ATP.

This sequence belongs to the ATPase alpha/beta chains family. In terms of assembly, F-type ATPases have 2 components, CF(1) - the catalytic core - and CF(0) - the membrane proton channel. CF(1) has five subunits: alpha(3), beta(3), gamma(1), delta(1), epsilon(1). CF(0) has three main subunits: a(1), b(2) and c(9-12). The alpha and beta chains form an alternating ring which encloses part of the gamma chain. CF(1) is attached to CF(0) by a central stalk formed by the gamma and epsilon chains, while a peripheral stalk is formed by the delta and b chains.

The protein resides in the cell membrane. It carries out the reaction ATP + H2O + 4 H(+)(in) = ADP + phosphate + 5 H(+)(out). Its function is as follows. Produces ATP from ADP in the presence of a proton gradient across the membrane. The alpha chain is a regulatory subunit. This is ATP synthase subunit alpha 1 from Listeria welshimeri serovar 6b (strain ATCC 35897 / DSM 20650 / CCUG 15529 / CIP 8149 / NCTC 11857 / SLCC 5334 / V8).